The primary structure comprises 679 residues: Protein hook (679 aa).

Positions 1-155 are interaction with microtubules; it reads MSAPKNEMYY…NIMRALQELE (155 aa). Residues 6 to 123 enclose the Calponin-homology (CH) domain; that stretch reads NEMYYSLLEW…RLLQLVLGCA (118 aa). Coiled coils occupy residues 135-437 and 480-574; these read EIMC…LKCG and QTAL…QEIL.

It belongs to the hook family. In terms of assembly, homodimer. Interacts with microtubules via its N-terminus.

It is found in the cytoplasm. Its subcellular location is the cytoskeleton. The protein localises to the endosome. It localises to the synapse. In terms of biological role, involved in endocytic trafficking by stabilizing organelles of the endocytic pathway. Probably acts as a cytoskeletal linker protein required to tether endosome vesicles to the cytoskeleton. Involved in modulation of endocytosis at stages required for down-regulation of membrane proteins that control synapse size. Not involved in synaptic vesicle recycling. Required in R7 cells for boss endocytosis into multivesicular bodies (MVBs). Has a role in regulating adult longevity. This Drosophila melanogaster (Fruit fly) protein is Protein hook.